An 81-amino-acid chain; its full sequence is uncharacterized protein (81 aa).

The first 31 residues, 1-31 (MRYNSFLSVLALFNVLLWFTFILAISMTFSA), serve as a signal peptide directing secretion. A helical membrane pass occupies residues 52 to 74 (WFFVLLPYVIGLFFAIFDSATIG).

The protein localises to the membrane. This is an uncharacterized protein from Pasteurella multocida (strain Pm70).